Consider the following 273-residue polypeptide: Zinc finger protein 80 (273 aa).

2 consecutive C2H2-type zinc fingers follow at residues Tyr49–His71 and Tyr77–His99. A C2H2-type 3; atypical zinc finger spans residues Cys105–His127. 4 consecutive C2H2-type zinc fingers follow at residues Tyr133–His155, Phe161–His183, Cys189–His211, and Tyr217–His239.

Belongs to the krueppel C2H2-type zinc-finger protein family.

The protein resides in the nucleus. May be involved in transcriptional regulation. In Homo sapiens (Human), this protein is Zinc finger protein 80 (ZNF80).